The chain runs to 124 residues: Fluoride-specific ion channel FluC (124 aa).

4 consecutive transmembrane segments (helical) span residues 1–21 (MIAL…LRFA), 37–57 (GTLA…GLFL), 69–89 (GLIV…LDTV), and 99–119 (LALG…WAGL). Na(+) is bound by residues Gly-76 and Thr-79.

The protein belongs to the fluoride channel Fluc/FEX (TC 1.A.43) family.

The protein localises to the cell inner membrane. The enzyme catalyses fluoride(in) = fluoride(out). Na(+) is not transported, but it plays an essential structural role and its presence is essential for fluoride channel function. Fluoride-specific ion channel. Important for reducing fluoride concentration in the cell, thus reducing its toxicity. This is Fluoride-specific ion channel FluC from Pseudomonas putida (strain ATCC 700007 / DSM 6899 / JCM 31910 / BCRC 17059 / LMG 24140 / F1).